Reading from the N-terminus, the 540-residue chain is GMP synthase [glutamine-hydrolyzing] (540 aa).

The Glutamine amidotransferase type-1 domain occupies 26 to 216; sequence IIIILDFGSQ…VYHICECEPT (191 aa). The Nucleophile role is filled by Cys-103. Residues His-190 and Glu-192 contribute to the active site. One can recognise a GMPS ATP-PPase domain in the interval 217 to 415; the sequence is WTTAAFVEEA…VGLPEEIVQR (199 aa). 244 to 250 provides a ligand contact to ATP; it reads SGGVDSS.

In terms of assembly, homodimer.

It catalyses the reaction XMP + L-glutamine + ATP + H2O = GMP + L-glutamate + AMP + diphosphate + 2 H(+). Its pathway is purine metabolism; GMP biosynthesis; GMP from XMP (L-Gln route): step 1/1. Catalyzes the synthesis of GMP from XMP. This is GMP synthase [glutamine-hydrolyzing] from Nostoc sp. (strain PCC 7120 / SAG 25.82 / UTEX 2576).